Consider the following 278-residue polypeptide: Large ribosomal subunit protein uL2 (278 aa).

Disordered regions lie at residues 1 to 20, 25 to 57, and 224 to 278; these read MAIRKYKPTTPGRRGSSVSD, TRSTPEKSLLRPLTKSGGRNAHGRITTRHRGGG, and VVMN…GKKR. Composition is skewed to basic residues over residues 45–57 and 269–278; these read AHGRITTRHRGGG and VRRRKTGKKR.

The protein belongs to the universal ribosomal protein uL2 family. In terms of assembly, part of the 50S ribosomal subunit. Forms a bridge to the 30S subunit in the 70S ribosome.

Functionally, one of the primary rRNA binding proteins. Required for association of the 30S and 50S subunits to form the 70S ribosome, for tRNA binding and peptide bond formation. It has been suggested to have peptidyltransferase activity; this is somewhat controversial. Makes several contacts with the 16S rRNA in the 70S ribosome. In Nocardia farcinica (strain IFM 10152), this protein is Large ribosomal subunit protein uL2.